The sequence spans 167 residues: MELWLTGTILKPKGLKGELKVQPVTDFPDRFLSRTKYFAGRQPETVVPVNVKSATLSQGFAWLFFEGVDSREKAQEMAGMHLYIEEKECAPRPQNRAWLHELEGMRVKGRDGVEVGVLTAILPMPAHEVYEVRTGNGTVLIPAIDEFIDEISLEGGYIVVPRFDEFL.

The PRC barrel domain occupies 94–166; the sequence is QNRAWLHELE…YIVVPRFDEF (73 aa).

Belongs to the RimM family. Binds ribosomal protein uS19.

The protein localises to the cytoplasm. In terms of biological role, an accessory protein needed during the final step in the assembly of 30S ribosomal subunit, possibly for assembly of the head region. Essential for efficient processing of 16S rRNA. May be needed both before and after RbfA during the maturation of 16S rRNA. It has affinity for free ribosomal 30S subunits but not for 70S ribosomes. The polypeptide is Ribosome maturation factor RimM (Chlorobium phaeovibrioides (strain DSM 265 / 1930) (Prosthecochloris vibrioformis (strain DSM 265))).